A 111-amino-acid polypeptide reads, in one-letter code: Large ribosomal subunit protein uL22 (111 aa).

This sequence belongs to the universal ribosomal protein uL22 family. Part of the 50S ribosomal subunit.

Functionally, this protein binds specifically to 23S rRNA; its binding is stimulated by other ribosomal proteins, e.g. L4, L17, and L20. It is important during the early stages of 50S assembly. It makes multiple contacts with different domains of the 23S rRNA in the assembled 50S subunit and ribosome. Its function is as follows. The globular domain of the protein is located near the polypeptide exit tunnel on the outside of the subunit, while an extended beta-hairpin is found that lines the wall of the exit tunnel in the center of the 70S ribosome. This chain is Large ribosomal subunit protein uL22, found in Clostridium kluyveri (strain NBRC 12016).